We begin with the raw amino-acid sequence, 183 residues long: Orotate phosphoribosyltransferase (183 aa).

5-phospho-alpha-D-ribose 1-diphosphate-binding positions include arginine 90, lysine 91, lysine 94, and 115–123; that span reads DDVATTGGS. Residues threonine 119 and arginine 147 each coordinate orotate.

Belongs to the purine/pyrimidine phosphoribosyltransferase family. PyrE subfamily. In terms of assembly, homodimer. Mg(2+) is required as a cofactor.

It carries out the reaction orotidine 5'-phosphate + diphosphate = orotate + 5-phospho-alpha-D-ribose 1-diphosphate. Its pathway is pyrimidine metabolism; UMP biosynthesis via de novo pathway; UMP from orotate: step 1/2. Catalyzes the transfer of a ribosyl phosphate group from 5-phosphoribose 1-diphosphate to orotate, leading to the formation of orotidine monophosphate (OMP). In Methanopyrus kandleri (strain AV19 / DSM 6324 / JCM 9639 / NBRC 100938), this protein is Orotate phosphoribosyltransferase.